Here is a 485-residue protein sequence, read N- to C-terminus: Glutamyl-tRNA(Gln) amidotransferase subunit A (485 aa).

Active-site charge relay system residues include K79 and S154. S178 (acyl-ester intermediate) is an active-site residue.

It belongs to the amidase family. GatA subfamily. Heterotrimer of A, B and C subunits.

The enzyme catalyses L-glutamyl-tRNA(Gln) + L-glutamine + ATP + H2O = L-glutaminyl-tRNA(Gln) + L-glutamate + ADP + phosphate + H(+). Its function is as follows. Allows the formation of correctly charged Gln-tRNA(Gln) through the transamidation of misacylated Glu-tRNA(Gln) in organisms which lack glutaminyl-tRNA synthetase. The reaction takes place in the presence of glutamine and ATP through an activated gamma-phospho-Glu-tRNA(Gln). In Clostridium botulinum (strain ATCC 19397 / Type A), this protein is Glutamyl-tRNA(Gln) amidotransferase subunit A.